Here is a 232-residue protein sequence, read N- to C-terminus: Ribose-5-phosphate isomerase A (232 aa).

Residues 31-34 (TGST), 87-90 (DGAD), and 100-103 (KGGG) contribute to the substrate site. The active-site Proton acceptor is the E109. A substrate-binding site is contributed by K127.

It belongs to the ribose 5-phosphate isomerase family. In terms of assembly, homodimer.

It carries out the reaction aldehydo-D-ribose 5-phosphate = D-ribulose 5-phosphate. It participates in carbohydrate degradation; pentose phosphate pathway; D-ribose 5-phosphate from D-ribulose 5-phosphate (non-oxidative stage): step 1/1. Its function is as follows. Catalyzes the reversible conversion of ribose-5-phosphate to ribulose 5-phosphate. This chain is Ribose-5-phosphate isomerase A, found in Bifidobacterium adolescentis (strain ATCC 15703 / DSM 20083 / NCTC 11814 / E194a).